Here is a 50-residue protein sequence, read N- to C-terminus: Temporin-SHa (50 aa).

An N-terminal signal peptide occupies residues 1–10; the sequence is FLGTINLSLC. The propeptide occupies 11-35; that stretch reads EQERDADEEERRDEPNESNVEVEKR. F48 is modified (phenylalanine amide).

Belongs to the frog skin active peptide (FSAP) family. Temporin subfamily. Expressed by the skin glands.

It localises to the secreted. The protein localises to the target cell membrane. Its function is as follows. Amphipathic alpha-helical antimicrobial peptide with highly potent activity against Gram-positive bacteria, and potent activity Gram-negative bacteria and fungi (MIC=2-30 uM). Acts through membranolytic mechanism involving rapid membrane permeabilization and depolarization. Shows a direct extra-cellular antiviral activity probably through degradation of the viral envelope. Also shows a weak indirect antiviral activity by inhibiting virus replication. Also displays anti-trypanosoma and anti-leishmania (prosmastigotes and axenic amastigotes) activity through membranolytic mechanism. Also induces apoptosis in leishmania promastigotes at high peptide concentrations. Shows moderate hemolytic activity (LC(50)=25 uM). In contrast to many antibiotics, this peptide does not induce bacterial resistance. This is Temporin-SHa from Pelophylax saharicus (Sahara frog).